A 114-amino-acid polypeptide reads, in one-letter code: Large ribosomal subunit protein uL18 (114 aa).

It belongs to the universal ribosomal protein uL18 family. Part of the 50S ribosomal subunit; part of the 5S rRNA/L5/L18/L25 subcomplex. Contacts the 5S and 23S rRNAs.

Functionally, this is one of the proteins that bind and probably mediate the attachment of the 5S RNA into the large ribosomal subunit, where it forms part of the central protuberance. The chain is Large ribosomal subunit protein uL18 from Porphyromonas gingivalis (strain ATCC BAA-308 / W83).